The sequence spans 499 residues: Multiphosphoryl transfer protein (499 aa).

Residues 2 to 142 form the PTS EIIA type-2 domain; it reads LELSESNIHL…AEFCAILMGE (141 aa). His62 acts as the Tele-phosphohistidine intermediate; for EIIA activity in catalysis. The residue at position 62 (His62) is a Phosphohistidine; by HPr. The tract at residues 155 to 285 is m domain; sequence SLDVNTQSLL…SDVETQSVEG (131 aa). The region spanning 286-376 is the HPr 1 domain; that stretch reads AVVGTFTIRN…KAIANGLGEN (91 aa). Catalysis depends on His300, which acts as the Pros-phosphohistidine intermediate; for HPr 1 activity. Position 300 is a phosphohistidine (His300). The linker stretch occupies residues 378-409; sequence SAVPPSEPDTIEIMGDQIHTPAVTEDDNLPAN. One can recognise an HPr 2 domain in the interval 410 to 499; the sequence is AIEAVFVIKN…GAVIESGLGE (90 aa). A Phosphohistidine modification is found at His424. Catalysis depends on His424, which acts as the Pros-phosphohistidine intermediate; for HPr 2 activity.

The protein localises to the cytoplasm. Its function is as follows. The phosphoenolpyruvate-dependent sugar phosphotransferase system (sugar PTS), a major carbohydrate active transport system, catalyzes the phosphorylation of incoming sugar substrates concomitantly with their translocation across the cell membrane. The enzyme II FruAB PTS system is involved in fructose transport. This chain is Multiphosphoryl transfer protein (fruB), found in Haemophilus influenzae (strain ATCC 51907 / DSM 11121 / KW20 / Rd).